Here is a 185-residue protein sequence, read N- to C-terminus: Elongation factor P (185 aa).

It belongs to the elongation factor P family.

It is found in the cytoplasm. It participates in protein biosynthesis; polypeptide chain elongation. Involved in peptide bond synthesis. Stimulates efficient translation and peptide-bond synthesis on native or reconstituted 70S ribosomes in vitro. Probably functions indirectly by altering the affinity of the ribosome for aminoacyl-tRNA, thus increasing their reactivity as acceptors for peptidyl transferase. This chain is Elongation factor P, found in Desulfovibrio desulfuricans (strain ATCC 27774 / DSM 6949 / MB).